An 846-amino-acid polypeptide reads, in one-letter code: Translation initiation factor IF-2 (846 aa).

The disordered stretch occupies residues 199–219; the sequence is KREEEEKKSKAKKAGGKGFKK. Residues 207 to 219 show a composition bias toward basic residues; it reads SKAKKAGGKGFKK. In terms of domain architecture, tr-type G spans 345–512; that stretch reads SRAPVVTIMG…AVLLQSEVLE (168 aa). The tract at residues 354 to 361 is G1; sequence GHVDHGKT. 354–361 contacts GTP; it reads GHVDHGKT. The interval 379–383 is G2; the sequence is GITQH. The tract at residues 400–403 is G3; the sequence is DTPG. GTP is bound by residues 400–404 and 454–457; these read DTPGH and NKID. The segment at 454–457 is G4; that stretch reads NKID. Positions 490–492 are G5; the sequence is SAK.

Belongs to the TRAFAC class translation factor GTPase superfamily. Classic translation factor GTPase family. IF-2 subfamily.

It is found in the cytoplasm. One of the essential components for the initiation of protein synthesis. Protects formylmethionyl-tRNA from spontaneous hydrolysis and promotes its binding to the 30S ribosomal subunits. Also involved in the hydrolysis of GTP during the formation of the 70S ribosomal complex. In Francisella tularensis subsp. holarctica (strain LVS), this protein is Translation initiation factor IF-2.